Consider the following 674-residue polypeptide: Methionine--tRNA ligase (674 aa).

The short motif at 11-21 (PYANGDLHLGH) is the 'HIGH' region element. Residues Cys142, Cys145, Cys155, and Cys158 each contribute to the Zn(2+) site. Positions 330–334 (KMSKS) match the 'KMSKS' region motif. Lys333 contributes to the ATP binding site. The tRNA-binding domain occupies 574–674 (DFMKVDLRIA…EGAQPGMRVK (101 aa)).

This sequence belongs to the class-I aminoacyl-tRNA synthetase family. MetG type 1 subfamily. As to quaternary structure, homodimer. Requires Zn(2+) as cofactor.

It localises to the cytoplasm. The catalysed reaction is tRNA(Met) + L-methionine + ATP = L-methionyl-tRNA(Met) + AMP + diphosphate. Functionally, is required not only for elongation of protein synthesis but also for the initiation of all mRNA translation through initiator tRNA(fMet) aminoacylation. In Francisella tularensis subsp. tularensis (strain FSC 198), this protein is Methionine--tRNA ligase.